The primary structure comprises 225 residues: Redox-sensing transcriptional repressor Rex (225 aa).

Residues 16–55 (IYYRYLNILLDADKKRVSSTELSEAVKVDSATIRRDFSYF) constitute a DNA-binding region (H-T-H motif). 90–95 (GVGNLG) contributes to the NAD(+) binding site.

Belongs to the transcriptional regulatory Rex family. As to quaternary structure, homodimer.

Its subcellular location is the cytoplasm. Its function is as follows. Modulates transcription in response to changes in cellular NADH/NAD(+) redox state. This is Redox-sensing transcriptional repressor Rex from Lactiplantibacillus plantarum (strain ATCC BAA-793 / NCIMB 8826 / WCFS1) (Lactobacillus plantarum).